The sequence spans 512 residues: Maturase K (512 aa).

Belongs to the intron maturase 2 family. MatK subfamily.

The protein localises to the plastid. It localises to the chloroplast. Its function is as follows. Usually encoded in the trnK tRNA gene intron. Probably assists in splicing its own and other chloroplast group II introns. This Koelreuteria paniculata (Goldenrain tree) protein is Maturase K.